A 468-amino-acid chain; its full sequence is Ubiquitin carboxyl-terminal hydrolase 17-like protein B (468 aa).

Residues 1–20 form a disordered region; that stretch reads MVVALSFPEADPAMSPPSAP. Positions 51 to 348 constitute a USP domain; sequence CGLQNTGNSC…NAYVLFYVQQ (298 aa). C60 serves as the catalytic Nucleophile. H307 functions as the Proton acceptor in the catalytic mechanism. Positions 374–449 are disordered; that stretch reads KKSGEKKHNK…GGQNLRNTEG (76 aa). Over residues 394-403 the composition is skewed to basic and acidic residues; sequence CENREKRSSK. The segment covering 422–434 has biased composition (polar residues); the sequence is GQKQENTKLTPQE.

The protein belongs to the peptidase C19 family. USP17 subfamily. Post-translationally, ubiquitinated. As to expression, detected in brain, heart, liver, lung, kidney, ovary and spleen.

The enzyme catalyses Thiol-dependent hydrolysis of ester, thioester, amide, peptide and isopeptide bonds formed by the C-terminal Gly of ubiquitin (a 76-residue protein attached to proteins as an intracellular targeting signal).. Inhibited by ubiquitin aldehyde. In terms of biological role, deubiquitinating enzyme that removes conjugated ubiquitin from specific proteins to regulate different cellular processes. This chain is Ubiquitin carboxyl-terminal hydrolase 17-like protein B, found in Mus musculus (Mouse).